The following is a 235-amino-acid chain: Putative quercetin 2,3-dioxygenase ZMO1337 (235 aa).

4 residues coordinate a divalent metal cation: H57, H59, H101, and E103.

Belongs to the pirin family. A divalent metal cation serves as cofactor.

It carries out the reaction quercetin + O2 = 2-(3,4-dihydroxybenzoyloxy)-4,6-dihydroxybenzoate + CO. It functions in the pathway flavonoid metabolism; quercetin degradation. Putative quercetin 2,3-dioxygenase. The chain is Putative quercetin 2,3-dioxygenase ZMO1337 from Zymomonas mobilis subsp. mobilis (strain ATCC 31821 / ZM4 / CP4).